A 573-amino-acid chain; its full sequence is Solute carrier family 41 member 2 (573 aa).

At 1–162 the chain is on the extracellular side; the sequence is MTNSKGRSIT…KESSGIMALQ (162 aa). 2 positions are modified to phosphoserine: Ser136 and Ser137. The helical transmembrane segment at 163–183 threads the bilayer; sequence ILVPFLLAGFGTVSAGMVLDI. The Cytoplasmic segment spans residues 184-195; it reads VQHWEVFRKVTE. A helical membrane pass occupies residues 196 to 216; it reads VFILVPALLGLKGNLEMTLAS. At 217-245 the chain is on the extracellular side; that stretch reads RLSTAVNIGKMDSPIEKWNLIIGNLALKQ. Residues 246–266 form a helical membrane-spanning segment; that stretch reads VQATVVGFLAAVAAIILGWIP. Over 267-282 the chain is Cytoplasmic; sequence EGKYYLDHSILLCSSS. The helical transmembrane segment at 283 to 303 threads the bilayer; the sequence is VATAFIASLLQGIIMVGVIVG. The Extracellular segment spans residues 304–313; the sequence is SKKTGINPDN. A helical transmembrane segment spans residues 314-334; it reads VATPIAASFGDLITLAILAWI. The Cytoplasmic segment spans residues 335–347; the sequence is SQGLYSCLETYYY. A helical membrane pass occupies residues 348 to 368; the sequence is ISPLVGVFFLALTPIWIIIAA. At 369–376 the chain is on the extracellular side; sequence KHPATRTV. A helical transmembrane segment spans residues 377-397; the sequence is LHSGWEPVITAMVISSIGGLI. The Cytoplasmic portion of the chain corresponds to 398–406; the sequence is LDTTVSDPN. The chain crosses the membrane as a helical span at residues 407–427; sequence LVGIVVYTPVINGIGGNLVAI. The Extracellular segment spans residues 428 to 469; sequence QASRISTYLHLHSIPGELPDEPKGCYYPFRTFFGPGVNNKSA. Residues 470–490 traverse the membrane as a helical segment; the sequence is QVLLLLVIPGHLIFLYTIHLM. At 491–498 the chain is on the cytoplasmic side; it reads KSGHTSLT. Residues 499–519 form a helical membrane-spanning segment; sequence IIFIVVYLFGAVLQVFTLLWI. Topologically, residues 520-543 are extracellular; that stretch reads ADWMVHHFWRKGKDPDSFSIPYLT. The chain crosses the membrane as a helical span at residues 544 to 564; that stretch reads ALGDLLGTALLALSFHFLWLI. Topologically, residues 565-573 are cytoplasmic; sequence GDRDGDVGD.

Belongs to the SLC41A transporter family.

It localises to the cell membrane. The enzyme catalyses Mg(2+)(in) = Mg(2+)(out). It catalyses the reaction Mn(2+)(in) = Mn(2+)(out). The catalysed reaction is Co(2+)(in) = Co(2+)(out). It carries out the reaction Ni(2+)(in) = Ni(2+)(out). The enzyme catalyses Fe(2+)(in) = Fe(2+)(out). In terms of biological role, acts as a plasma-membrane magnesium transporter. Can also mediate the transport of other divalent metal cations in an order of Ba(2+) &gt; Ni(2+) &gt; Co(2+) &gt; Fe(2+) &gt; Mn(2+). This chain is Solute carrier family 41 member 2 (SLC41A2), found in Homo sapiens (Human).